Here is a 120-residue protein sequence, read N- to C-terminus: Histone H2B (120 aa).

The tract at residues 1–26 is disordered; it reads MAEPAKKKPKKLPKKDKGQKDIKRKK. Ala2 bears the Blocked amino end (Ala) mark. 3 positions are modified to N6-acetyllysine: Lys7, Lys10, and Lys11. Lys115 is covalently cross-linked (Glycyl lysine isopeptide (Lys-Gly) (interchain with G-Cter in ubiquitin)).

This sequence belongs to the histone H2B family. The nucleosome is a histone octamer containing two molecules each of H2A, H2B, H3 and H4 assembled in one H3-H4 heterotetramer and two H2A-H2B heterodimers. The octamer wraps approximately 147 bp of DNA. Post-translationally, can be acetylated to form H2BK6ac, H2BK33ac and H2BK34ac. Monoubiquitinated to form H2BK143ub1; may give a specific tag for epigenetic transcriptional activation.

Its subcellular location is the nucleus. It is found in the chromosome. Functionally, core component of nucleosome. Nucleosomes wrap and compact DNA into chromatin, limiting DNA accessibility to the cellular machineries which require DNA as a template. Histones thereby play a central role in transcription regulation, DNA repair, DNA replication and chromosomal stability. DNA accessibility is regulated via a complex set of post-translational modifications of histones, also called histone code, and nucleosome remodeling. This Pisum sativum (Garden pea) protein is Histone H2B.